The sequence spans 370 residues: Acyl-CoA:lysophosphatidylglycerol acyltransferase 1 (370 aa).

A helical membrane pass occupies residues 22 to 42 (FAFMVANNLVAIPSYICYVII). An HXXXXD motif motif is present at residues 101–106 (HQATGD). Residues 342–362 (MWIFLIQSFAFLSGYLWYHII) form a helical membrane-spanning segment.

Belongs to the 1-acyl-sn-glycerol-3-phosphate acyltransferase family. In terms of tissue distribution, ubiquitous. Expressed in heart, kidney, liver, skin, intestine, and thymus. Highest expression is detected in brain and testis.

The protein resides in the endoplasmic reticulum membrane. It catalyses the reaction a 2-acyl-sn-glycero-3-phosphoethanolamine + octadecanoyl-CoA = 1-octadecanoyl-2-acyl-sn-glycero-3-phosphoethanolamine + CoA. It carries out the reaction 2-(9Z-octadecenoyl)-sn-glycero-3-phosphoethanolamine + octadecanoyl-CoA = 1-octadecanoyl-2-(9Z-octadecenoyl)-sn-glycero-3-phosphoethanolamine + CoA. The catalysed reaction is a 2-acyl-sn-glycero-3-phosphoethanolamine + hexadecanoyl-CoA = 1-hexadecanoyl-2-acyl-sn-glycero-3-phosphoethanolamine + CoA. The enzyme catalyses 2-(9Z-octadecenoyl)-sn-glycero-3-phosphoethanolamine + hexadecanoyl-CoA = 1-hexadecanoyl-2-(9Z-octadecenoyl)-sn-glycero-3-phosphoethanolamine + CoA. It catalyses the reaction 1-tetradecanoyl-sn-glycero-3-phospho-(1'-sn-glycerol) + hexadecanoyl-CoA = 1-tetradecanoyl-2-hexadecanoyl-sn-glycero-3-phospho-(1'-sn-glycerol) + CoA. It carries out the reaction 1-hexadecanoyl-sn-glycero-3-phospho-(1'-sn-glycerol) + dodecanoyl-CoA = 1-hexadecanoyl-2-dodecanoyl-sn-glycero-3-phospho-(1'-sn-glycerol) + CoA. The catalysed reaction is 1-hexadecanoyl-sn-glycero-3-phospho-(1'-sn-glycerol) + hexadecanoyl-CoA = 1,2-dihexadecanoyl-sn-glycero-3-phospho-(1'-sn-glycerol) + CoA. The enzyme catalyses 1-hexadecanoyl-sn-glycero-3-phospho-(1'-sn-glycerol) + octadecanoyl-CoA = 1-hexadecanoyl-2-octadecanoyl-sn-glycero-3-phospho-(1'-sn-glycerol) + CoA. It catalyses the reaction 1-octadecanoyl-sn-glycero-3-phospho-(1'-sn-glycerol) + hexadecanoyl-CoA = 1-octadecanoyl-2-hexadecanoyl-sn-glycero-3-phospho-(1'-sn-glycerol) + CoA. It carries out the reaction 1-(9Z-octadecenoyl)-sn-glycero-3-phospho-(1'-sn-glycerol) + dodecanoyl-CoA = 1-(9Z-octadecenoyl)-2-dodecanoyl-sn-glycero-3-phospho-(1'-sn-glycerol) + CoA. The catalysed reaction is 1-hexadecanoyl-sn-glycero-3-phospho-(1'-sn-glycerol) + (9Z)-octadecenoyl-CoA = 1-hexadecanoyl-2-(9Z-octadecenoyl)-sn-glycero-3-phospho-(1'-sn-glycerol) + CoA. The enzyme catalyses 1-(9Z-octadecenoyl)-sn-glycero-3-phospho-(1'-sn-glycerol) + hexadecanoyl-CoA = 1-(9Z-octadecenoyl)-2-hexadecanoyl-sn-glycero-3-phospho-(1'-sn-glycerol) + CoA. It catalyses the reaction 1-(9Z-octadecenoyl)-sn-glycero-3-phospho-(1'-sn-glycerol) + (9Z)-octadecenoyl-CoA = 1,2-di-(9Z-octadecenoyl)-sn-glycero-3-phospho-(1'-sn-glycerol) + CoA. It carries out the reaction a 2-acylglycerol + an acyl-CoA = a 1,2-diacylglycerol + CoA. The catalysed reaction is a 2-acylglycerol + hexadecanoyl-CoA = a 1-hexadecanoyl-2-acylglycerol + CoA. The enzyme catalyses a 1-acylglycerol + hexadecanoyl-CoA = an hexadecanoyl-acylglycerol + CoA. It catalyses the reaction a 2-acyl-sn-glycero-3-phosphocholine + an acyl-CoA = a 1,2-diacyl-sn-glycero-3-phosphocholine + CoA. It carries out the reaction 2-(9Z-octadecenoyl)-sn-glycero-3-phosphocholine + octadecanoyl-CoA = 1-octadecanoyl-2-(9Z-octadecenoyl)-sn-glycero-3-phosphocholine + CoA. The catalysed reaction is 2-(9Z,12Z-octadecadienoyl)-sn-glycero-3-phosphocholine + octadecanoyl-CoA = 1-octadecanoyl-2-(9Z,12Z)-octadecadienoyl-sn-glycero-3-phosphocholine + CoA. The enzyme catalyses 2-(5Z,8Z,11Z,14Z)-eicosatetraenoyl-sn-glycero-3-phosphocholine + octadecanoyl-CoA = 1-octadecanoyl-2-(5Z,8Z,11Z,14Z-eicosatetraenoyl)-sn-glycero-3-phosphocholine + CoA. It catalyses the reaction 2-(9Z-octadecenoyl)-sn-glycero-3-phosphocholine + hexadecanoyl-CoA = 1-hexadecanoyl-2-(9Z-octadecenoyl)-sn-glycero-3-phosphocholine + CoA. It carries out the reaction 2-(9Z-octadecenoyl)-sn-glycero-3-phospho-L-serine + hexadecanoyl-CoA = 1-hexadecanoyl-2-(9Z-octadecenoyl)-sn-glycero-3-phospho-L-serine + CoA. The catalysed reaction is 2-(4Z,7Z,10Z,13Z,16Z,19Z-docosahexaenoyl)-sn-glycero-3-phosphocholine + octadecanoyl-CoA = 1-octadecanoyl-2-(4Z,7Z,10Z,13Z,16Z,19Z-docosahexaenoyl)-sn-glycero-3-phosphocholine + CoA. The enzyme catalyses 1-(9Z-octadecenoyl)-sn-glycero-3-phospho-L-serine + octadecanoyl-CoA = 1-(9Z-octadecenoyl)-2-octadecanoyl-sn-glycero-3-phospho-L-serine + CoA. It catalyses the reaction a 2-acyl-sn-glycero-3-phosphoethanolamine + a fatty acyl-CoA = a 1,2-diacyl-sn-glycero-3-phosphoethanolamine + CoA. Its function is as follows. Lysophospholipid acyltransferase involved in fatty acyl chain remodeling of glycerophospholipids in the endoplasmic reticulum membrane. Selectively catalyzes the transfer and esterification of saturated long-chain fatty acids from acyl-CoA to the sn-1 position of 1-lyso-2-acyl phosphatidylethanolamines (1-lyso-PE, LPE), with a preference for stearoyl CoA over palmitoyl CoA as acyl donor. Acts in concert with an unknown phospholipase A1 to convert palmitate PE species into stearate ones. Provides substrates to the PE methylation pathway, controlling stearate/palmitate composition of PE and phosphatidylcholine (PC) species with an overall impact on de novo hepatic lipid synthesis, body fat content and life span. Can acylate lysophosphatidylglycerols (LPG) using various saturated fatty acyl-CoAs as acyl donors. Can also acylate monoacylglycerols with a preference for 2-monoacylglycerols over 1-monoacylglycerols. Has no activity toward lysophosphatidic acids (LPA) and lysophosphatidylcholines (LPC). The chain is Acyl-CoA:lysophosphatidylglycerol acyltransferase 1 from Mus musculus (Mouse).